A 61-amino-acid chain; its full sequence is MAKDIITGRHTTFGNKRSHALNSSRRQWKANLHKVRILVDGKPKRVWVSARALKSGKLTRV.

This sequence belongs to the bacterial ribosomal protein bL28 family.

The sequence is that of Large ribosomal subunit protein bL28 from Lacticaseibacillus paracasei (strain ATCC 334 / BCRC 17002 / CCUG 31169 / CIP 107868 / KCTC 3260 / NRRL B-441) (Lactobacillus paracasei).